The following is a 363-amino-acid chain: Sulfate/thiosulfate import ATP-binding protein CysA (363 aa).

The region spanning 3–237 (IEINNISKYF…PATRFVLEFL (235 aa)) is the ABC transporter domain. 35 to 42 (GPSGSGKT) provides a ligand contact to ATP.

The protein belongs to the ABC transporter superfamily. Sulfate/tungstate importer (TC 3.A.1.6) family. In terms of assembly, the complex is composed of two ATP-binding proteins (CysA), two transmembrane proteins (CysT and CysW) and a solute-binding protein (CysP).

It localises to the cell inner membrane. It carries out the reaction sulfate(out) + ATP + H2O = sulfate(in) + ADP + phosphate + H(+). It catalyses the reaction thiosulfate(out) + ATP + H2O = thiosulfate(in) + ADP + phosphate + H(+). Its function is as follows. Part of the ABC transporter complex CysAWTP involved in sulfate/thiosulfate import. Responsible for energy coupling to the transport system. In Yersinia pestis, this protein is Sulfate/thiosulfate import ATP-binding protein CysA.